We begin with the raw amino-acid sequence, 249 residues long: Proteasome subunit alpha type-7-1A (249 aa).

This sequence belongs to the peptidase T1A family. The 26S proteasome consists of a 20S proteasome core and two 19S regulatory subunits. The 20S proteasome core is composed of 28 subunits that are arranged in four stacked rings, resulting in a barrel-shaped structure. The two end rings are each formed by seven alpha subunits, and the two central rings are each formed by seven beta subunits. The catalytic chamber with the active sites is on the inside of the barrel. Testis specific.

It is found in the cytoplasm. Its subcellular location is the nucleus. Functionally, the proteasome is a multicatalytic proteinase complex which is characterized by its ability to cleave peptides with Arg, Phe, Tyr, Leu, and Glu adjacent to the leaving group at neutral or slightly basic pH. The proteasome has an ATP-dependent proteolytic activity. The polypeptide is Proteasome subunit alpha type-7-1A (Prosalpha4T1) (Drosophila melanogaster (Fruit fly)).